Reading from the N-terminus, the 326-residue chain is Flavanone 3-dioxygenase 3 (326 aa).

Polar residues predominate over residues 1 to 15; the sequence is MSDTSKGIPQEQLPS. The tract at residues 1-21 is disordered; the sequence is MSDTSKGIPQEQLPSQELHPP. One can recognise a Fe2OG dioxygenase domain in the interval 175 to 276; that stretch reads EGLQLLSVNC…RISLASIHGF (102 aa). Residues H200, D202, and H257 each coordinate Fe cation. A 2-oxoglutarate-binding site is contributed by R267.

It belongs to the iron/ascorbate-dependent oxidoreductase family. Fe(2+) is required as a cofactor. The cofactor is L-ascorbate. Expressed at very low levels in roots, leaves, stems and seeds.

The enzyme catalyses a (2S)-flavan-4-one + 2-oxoglutarate + O2 = a (2R,3R)-dihydroflavonol + succinate + CO2. It functions in the pathway secondary metabolite biosynthesis; flavonoid biosynthesis. In terms of biological role, catalyzes the 3-beta-hydroxylation of 2S-flavanones to 2R,3R-dihydroflavonols which are intermediates in the biosynthesis of flavonols, anthocyanidins, catechins and proanthocyanidins in plants. Converts (2S)-eriodictyol to (+)-taxifolin and (2S)-naringenin to (+)-(2R/3R)-dihydrokaempferol in vitro. The protein is Flavanone 3-dioxygenase 3 of Oryza sativa subsp. japonica (Rice).